Here is a 115-residue protein sequence, read N- to C-terminus: Probable mycobacterial cidal antitoxin Rv3188 (115 aa).

It belongs to the MbcA/ParS/Xre antitoxin family. As to quaternary structure, forms a heterotetramer with cognate toxin Rv3189.

In terms of biological role, probable antitoxin component of a type II toxin-antitoxin (TA) system. Neutralizes the activity of cognate toxin Rv3189 by blocking access to the toxin active site. This Mycobacterium tuberculosis (strain ATCC 25618 / H37Rv) protein is Probable mycobacterial cidal antitoxin Rv3188.